Reading from the N-terminus, the 83-residue chain is Translational regulator CsrA (83 aa).

It belongs to the CsrA/RsmA family. As to quaternary structure, homodimer; the beta-strands of each monomer intercalate to form a hydrophobic core, while the alpha-helices form wings that extend away from the core.

Its subcellular location is the cytoplasm. Functionally, a translational regulator that binds mRNA to regulate translation initiation and/or mRNA stability. Usually binds in the 5'-UTR at or near the Shine-Dalgarno sequence preventing ribosome-binding, thus repressing translation. Its main target seems to be the major flagellin gene, while its function is anatagonized by FliW. The polypeptide is Translational regulator CsrA (Thermotoga maritima (strain ATCC 43589 / DSM 3109 / JCM 10099 / NBRC 100826 / MSB8)).